The primary structure comprises 365 residues: Probable L-tyrosine/L-aspartate decarboxylase (365 aa).

K225 bears the N6-(pyridoxal phosphate)lysine mark.

This sequence belongs to the group II decarboxylase family. MfnA subfamily. Pyridoxal 5'-phosphate serves as cofactor.

It catalyses the reaction L-tyrosine + H(+) = tyramine + CO2. It carries out the reaction L-aspartate + H(+) = beta-alanine + CO2. It functions in the pathway cofactor biosynthesis; methanofuran biosynthesis. Its pathway is cofactor biosynthesis; coenzyme A biosynthesis. Its function is as follows. Catalyzes the decarboxylation of L-tyrosine to produce tyramine for methanofuran biosynthesis. Can also catalyze the decarboxylation of L-aspartate to produce beta-alanine for coenzyme A (CoA) biosynthesis. This chain is Probable L-tyrosine/L-aspartate decarboxylase, found in Methanocorpusculum labreanum (strain ATCC 43576 / DSM 4855 / Z).